Here is a 255-residue protein sequence, read N- to C-terminus: Small ribosomal subunit protein eS1 (255 aa).

Residue alanine 2 is modified to N-acetylalanine; partial.

Belongs to the eukaryotic ribosomal protein eS1 family. As to quaternary structure, component of the small ribosomal subunit. Mature ribosomes consist of a small (40S) and a large (60S) subunit. The 40S subunit contains about 33 different proteins and 1 molecule of RNA (18S). The 60S subunit contains about 49 different proteins and 3 molecules of RNA (25S, 5.8S and 5S).

The protein localises to the cytoplasm. This Candida glabrata (strain ATCC 2001 / BCRC 20586 / JCM 3761 / NBRC 0622 / NRRL Y-65 / CBS 138) (Yeast) protein is Small ribosomal subunit protein eS1.